The chain runs to 534 residues: Cytokinin dehydrogenase 1 (534 aa).

A signal peptide spans 1–18 (MAVVYYLLLAGLIACSHA). N-linked (GlcNAc...) asparagine glycosylation is found at Asn-52, Asn-63, and Asn-89. Residues 65–245 (TSALPAAVLY…TRARIAVEPA (181 aa)) enclose the FAD-binding PCMH-type domain. FAD contacts are provided by Phe-100, Gly-102, Arg-103, and Gly-104. Pros-8alpha-FAD histidine is present on His-105. Positions 106 and 110 each coordinate FAD. An N-linked (GlcNAc...) asparagine glycan is attached at Asn-134. 5 residues coordinate FAD: Asp-169, Thr-174, Ser-180, Ile-184, and Ile-235. Residue Asp-169 participates in N(6)-dimethylallyladenine binding. A trans-zeatin-binding site is contributed by Asp-169. N-linked (GlcNAc...) asparagine glycosylation is found at Asn-294, Asn-323, and Asn-338. Glu-381 serves as a coordination point for N(6)-dimethylallyladenine. Glu-381 lines the trans-zeatin pocket. Asn-434 is a glycosylation site (N-linked (GlcNAc...) asparagine). Residue Ser-456 participates in trans-zeatin binding. Tyr-491, Ser-527, and Gln-530 together coordinate FAD.

This sequence belongs to the oxygen-dependent FAD-linked oxidoreductase family. In terms of assembly, monomer. It depends on FAD as a cofactor. Glycosylated; with approximately 10 hexose residues per site. As to expression, expressed in immature kernels and unpollinated cobs. Weakly expressed in kernels harvested two weeks after anthesis.

The protein localises to the secreted. The protein resides in the extracellular space. It carries out the reaction N(6)-dimethylallyladenine + A + H2O = 3-methyl-2-butenal + adenine + AH2. Its activity is regulated as follows. Competitive inhibition by phenylureas. Functionally, catalyzes the oxidation of cytokinins, a family of N(6)-substituted adenine derivatives that are plant hormones, where the substituent is an isopentenyl group. Cleaves trans-zeatin, N(6)-dimethylallyladenine (isopentenyladenine), isopentenyladenosine, zeatin riboside and cis-zeatin, but not dihydrozeatin, kinetin and benzylaminopurine. This chain is Cytokinin dehydrogenase 1 (CKX1), found in Zea mays (Maize).